A 189-amino-acid chain; its full sequence is Thymidine kinase (189 aa).

ATP is bound by residues 9–16 (GTMNSGKT) and 85–88 (DESQ). Glu-86 serves as the catalytic Proton acceptor. Zn(2+)-binding residues include Cys-143, Cys-146, Cys-180, and His-183.

This sequence belongs to the thymidine kinase family. As to quaternary structure, homotetramer.

It localises to the cytoplasm. The catalysed reaction is thymidine + ATP = dTMP + ADP + H(+). The chain is Thymidine kinase from Streptococcus pyogenes serotype M6 (strain ATCC BAA-946 / MGAS10394).